A 166-amino-acid chain; its full sequence is uncharacterized protein (166 aa).

Pentapeptide repeat domains are found at residues 38–77, 78–117, and 118–157; these read GECL…NLRR, ALLD…NLER, and SFLR…EFWE.

This is an uncharacterized protein from Synechocystis sp. (strain ATCC 27184 / PCC 6803 / Kazusa).